Here is a 368-residue protein sequence, read N- to C-terminus: Biotin synthase (368 aa).

Residues 74 to 309 (CCGNVVDLCS…QQILRYAGGR (236 aa)) enclose the Radical SAM core domain. Residues Cys92, Cys96, and Cys99 each contribute to the [4Fe-4S] cluster site. [2Fe-2S] cluster contacts are provided by Cys137, Cys174, Cys234, and Arg304.

It belongs to the radical SAM superfamily. Biotin synthase family. In terms of assembly, homodimer. [4Fe-4S] cluster is required as a cofactor. [2Fe-2S] cluster serves as cofactor.

The catalysed reaction is (4R,5S)-dethiobiotin + (sulfur carrier)-SH + 2 reduced [2Fe-2S]-[ferredoxin] + 2 S-adenosyl-L-methionine = (sulfur carrier)-H + biotin + 2 5'-deoxyadenosine + 2 L-methionine + 2 oxidized [2Fe-2S]-[ferredoxin]. Its pathway is cofactor biosynthesis; biotin biosynthesis; biotin from 7,8-diaminononanoate: step 2/2. Functionally, catalyzes the conversion of dethiobiotin (DTB) to biotin by the insertion of a sulfur atom into dethiobiotin via a radical-based mechanism. This chain is Biotin synthase, found in Rippkaea orientalis (strain PCC 8801 / RF-1) (Cyanothece sp. (strain PCC 8801)).